The sequence spans 421 residues: 3-oxoacyl-[acyl-carrier-protein] synthase 2 (421 aa).

A Ketosynthase family 3 (KS3) domain is found at 1–417 (MRRVVITGTG…GTNASLILRR (417 aa)). Active-site for beta-ketoacyl synthase activity residues include Cys-170, His-311, and His-347.

This sequence belongs to the thiolase-like superfamily. Beta-ketoacyl-ACP synthases family. As to quaternary structure, homodimer.

The catalysed reaction is a fatty acyl-[ACP] + malonyl-[ACP] + H(+) = a 3-oxoacyl-[ACP] + holo-[ACP] + CO2. It carries out the reaction (9Z)-hexadecenoyl-[ACP] + malonyl-[ACP] + H(+) = 3-oxo-(11Z)-octadecenoyl-[ACP] + holo-[ACP] + CO2. It participates in lipid metabolism; fatty acid biosynthesis. Involved in the type II fatty acid elongation cycle. Catalyzes the elongation of a wide range of acyl-ACP by the addition of two carbons from malonyl-ACP to an acyl acceptor. Can efficiently catalyze the conversion of palmitoleoyl-ACP (cis-hexadec-9-enoyl-ACP) to cis-vaccenoyl-ACP (cis-octadec-11-enoyl-ACP), an essential step in the thermal regulation of fatty acid composition. This chain is 3-oxoacyl-[acyl-carrier-protein] synthase 2 (fabF), found in Rhizobium meliloti (strain 1021) (Ensifer meliloti).